Here is a 209-residue protein sequence, read N- to C-terminus: Thymidine kinase (209 aa).

ATP is bound by residues 16-23 (GPMFAGKT) and 90-93 (DEAQ). The active-site Proton acceptor is glutamate 91.

It belongs to the thymidine kinase family. Homotetramer.

It is found in the cytoplasm. The catalysed reaction is thymidine + ATP = dTMP + ADP + H(+). This Onion yellows phytoplasma (strain OY-M) protein is Thymidine kinase.